Consider the following 67-residue polypeptide: Large ribosomal subunit protein bL35 (67 aa).

A compositionally biased stretch (basic residues) spans 1–11 (MPKLKTRKAAA). The segment at 1-22 (MPKLKTRKAAAKRFEATGSGKK) is disordered.

Belongs to the bacterial ribosomal protein bL35 family.

The polypeptide is Large ribosomal subunit protein bL35 (Microcystis aeruginosa (strain NIES-843 / IAM M-2473)).